A 730-amino-acid polypeptide reads, in one-letter code: Elongation factor 2 (730 aa).

The tr-type G domain maps to 19-260 (EKIRNIGIVA…MVIRFLPNPL (242 aa)). Residues 28-35 (AHIDHGKT), 94-98 (DTPGH), and 148-151 (NKVD) contribute to the GTP site. Histidine 596 is subject to Diphthamide.

Belongs to the TRAFAC class translation factor GTPase superfamily. Classic translation factor GTPase family. EF-G/EF-2 subfamily.

It is found in the cytoplasm. Catalyzes the GTP-dependent ribosomal translocation step during translation elongation. During this step, the ribosome changes from the pre-translocational (PRE) to the post-translocational (POST) state as the newly formed A-site-bound peptidyl-tRNA and P-site-bound deacylated tRNA move to the P and E sites, respectively. Catalyzes the coordinated movement of the two tRNA molecules, the mRNA and conformational changes in the ribosome. The protein is Elongation factor 2 (fusA) of Methanosarcina thermophila.